A 243-amino-acid polypeptide reads, in one-letter code: 7-cyano-7-deazaguanine synthase (243 aa).

ATP is bound at residue 18–28; that stretch reads FSGGQDSATCL. Zn(2+) contacts are provided by C206, C221, C224, and C227.

The protein belongs to the QueC family. The cofactor is Zn(2+).

It carries out the reaction 7-carboxy-7-deazaguanine + NH4(+) + ATP = 7-cyano-7-deazaguanine + ADP + phosphate + H2O + H(+). It functions in the pathway purine metabolism; 7-cyano-7-deazaguanine biosynthesis. Its function is as follows. Catalyzes the ATP-dependent conversion of 7-carboxy-7-deazaguanine (CDG) to 7-cyano-7-deazaguanine (preQ(0)). The sequence is that of 7-cyano-7-deazaguanine synthase from Methylorubrum extorquens (strain PA1) (Methylobacterium extorquens).